Here is a 191-residue protein sequence, read N- to C-terminus: Fe/S biogenesis protein NfuA (191 aa).

Residues C149 and C152 each contribute to the [4Fe-4S] cluster site.

This sequence belongs to the NfuA family. In terms of assembly, homodimer. It depends on [4Fe-4S] cluster as a cofactor.

Its function is as follows. Involved in iron-sulfur cluster biogenesis. Binds a 4Fe-4S cluster, can transfer this cluster to apoproteins, and thereby intervenes in the maturation of Fe/S proteins. Could also act as a scaffold/chaperone for damaged Fe/S proteins. The protein is Fe/S biogenesis protein NfuA of Sodalis glossinidius (strain morsitans).